A 620-amino-acid polypeptide reads, in one-letter code: Glutathione-regulated potassium-efflux system protein KefC (620 aa).

Over 1-3 the chain is Periplasmic; that stretch reads MDS. Residues 4–24 form a helical membrane-spanning segment; the sequence is HTLVQALIYLGSAALIVPIAV. Arginine 25 is a topological domain (cytoplasmic). The helical transmembrane segment at 26-46 threads the bilayer; sequence LGLGSVLGYLIAGCIIGPWGL. The Periplasmic segment spans residues 47–53; it reads RLVTDAE. Residues 54–74 form a helical membrane-spanning segment; the sequence is SILHFAEIGVVLMLFIIGLEL. Residues 75–89 are Cytoplasmic-facing; it reads DPQRLWKLRAAVFGG. A helical membrane pass occupies residues 90 to 110; it reads GALQMVICGGLLGLFCMLLGL. Over 111–113 the chain is Periplasmic; it reads RWQ. A helical membrane pass occupies residues 114–134; sequence VAELIGMTLALSSTAIAMQAM. At 135 to 148 the chain is on the cytoplasmic side; it reads NERNLMVTQMGRSA. The chain crosses the membrane as a helical span at residues 149-169; the sequence is FAVLLFQDIAAIPLVAMIPLL. Residues 170 to 177 are Periplasmic-facing; sequence AASSASTT. A helical membrane pass occupies residues 178 to 198; the sequence is MGAFALSALKVAGALVLVVLL. Residues 199 to 213 are Cytoplasmic-facing; the sequence is GRYVTRPALRFVARS. A helical membrane pass occupies residues 214 to 233; the sequence is GLREVFSAVALFLVFGFGLL. Topologically, residues 234-236 are periplasmic; sequence LEE. Residues 237–254 traverse the membrane as a helical segment; the sequence is VGLSMAMGAFLAGVLLAS. Residues 255–269 lie on the Cytoplasmic side of the membrane; sequence SEYRHALESDIEPFK. Residues 270-290 traverse the membrane as a helical segment; sequence GLLLGLFFIGVGMSIDFGTLI. Residues 291–293 are Periplasmic-facing; that stretch reads ENP. Residues 294–314 traverse the membrane as a helical segment; that stretch reads LRIVILLLGFLIIKIAMLWLI. Residues 315-326 are Cytoplasmic-facing; sequence ARPLQVPNKQRR. The chain crosses the membrane as a helical span at residues 327 to 347; that stretch reads WFAVLLGQGSEFAFVVFGAAQ. Over 348–358 the chain is Periplasmic; that stretch reads MANVLEPEWAK. Residues 359-379 traverse the membrane as a helical segment; that stretch reads SLTLAVALSMAATPILLVILN. The Cytoplasmic segment spans residues 380-620; sequence RLEQSSTEEA…ADEPETKPSS (241 aa). In terms of domain architecture, RCK N-terminal spans 399–518; that stretch reads QPRVIIAGFG…AGVEKPERET (120 aa). Positions 597-620 are disordered; that stretch reads GWQGTEEGKHTGNMADEPETKPSS.

The protein belongs to the monovalent cation:proton antiporter 2 (CPA2) transporter (TC 2.A.37) family. KefC subfamily. In terms of assembly, homodimer. Interacts with the regulatory subunit KefF.

It localises to the cell inner membrane. Functionally, pore-forming subunit of a potassium efflux system that confers protection against electrophiles. Catalyzes K(+)/H(+) antiport. This is Glutathione-regulated potassium-efflux system protein KefC from Escherichia coli O157:H7.